The following is a 387-amino-acid chain: Putative 8-amino-7-oxononanoate synthase (387 aa).

Arg19 is a substrate binding site. 107–108 (GY) is a pyridoxal 5'-phosphate binding site. A substrate-binding site is contributed by His132. Residues Ser180, 206–209 (DEAH), and 237–240 (TFGK) each bind pyridoxal 5'-phosphate. Position 240 is an N6-(pyridoxal phosphate)lysine (Lys240). Thr354 serves as a coordination point for substrate.

The protein belongs to the class-II pyridoxal-phosphate-dependent aminotransferase family. BioF subfamily. As to quaternary structure, homodimer. Pyridoxal 5'-phosphate serves as cofactor.

It carries out the reaction 6-carboxyhexanoyl-[ACP] + L-alanine + H(+) = (8S)-8-amino-7-oxononanoate + holo-[ACP] + CO2. It participates in cofactor biosynthesis; biotin biosynthesis. Catalyzes the decarboxylative condensation of pimeloyl-[acyl-carrier protein] and L-alanine to produce 8-amino-7-oxononanoate (AON), [acyl-carrier protein], and carbon dioxide. In Pasteurella multocida (strain Pm70), this protein is Putative 8-amino-7-oxononanoate synthase (bioF).